The chain runs to 173 residues: Alpha-crystallin A chain (173 aa).

Residue Met-1 is modified to N-acetylmethionine. Residues 1–63 are required for complex formation with BFSP1 and BFSP2; the sequence is MDITIQHPWF…RTVLESGISE (63 aa). Gln-6 carries the deamidated glutamine; partial modification. Position 45 is a phosphoserine (Ser-45). Position 50 is a deamidated glutamine; partial (Gln-50). Residues 52–164 form the sHSP domain; it reads LFRTVLESGI…SDRSIPVSRE (113 aa). Lys-99 carries the N6-acetyllysine modification. Zn(2+) contacts are provided by His-100, Glu-102, and His-107. A Phosphoserine modification is found at Ser-122. Asn-123 bears the Deamidated asparagine; partial mark. The tract at residues 144–173 is disordered; that stretch reads PKIHSNMESSHSDRSIPVSREEKPTLAPSS. A compositionally biased stretch (basic and acidic residues) spans 153–167; sequence SHSDRSIPVSREEKP. His-154 is a binding site for Zn(2+). Ser-162 carries an O-linked (GlcNAc) serine glycan.

This sequence belongs to the small heat shock protein (HSP20) family. In terms of assembly, heteromer composed of three CRYAA and one CRYAB subunits. Inter-subunit bridging via zinc ions enhances stability, which is crucial as there is no protein turn over in the lens. Can also form homodimers and homotetramers (dimers of dimers) which serve as the building blocks of homooligomers. Within homooligomers, the zinc-binding motif is created from residues of 3 different molecules. His-100 and Glu-102 from one molecule are ligands of the zinc ion, and His-107 and His-154 residues from additional molecules complete the site with tetrahedral coordination geometry. Part of a complex required for lens intermediate filament formation composed of BFSP1, BFSP2 and CRYAA. Acetylation at Lys-99 may increase chaperone activity. Post-translationally, undergoes age-dependent proteolytical cleavage at the C-terminus.

It localises to the cytoplasm. The protein localises to the nucleus. Its function is as follows. Contributes to the transparency and refractive index of the lens. Acts as a chaperone, preventing aggregation of various proteins under a wide range of stress conditions. Required for the correct formation of lens intermediate filaments as part of a complex composed of BFSP1, BFSP2 and CRYAA. This is Alpha-crystallin A chain (CRYAA) from Didelphis virginiana (North American opossum).